Consider the following 270-residue polypeptide: Probable septum site-determining protein MinC (270 aa).

The interval 105–129 (DRRAPSSKAADEAPVQQAEPAAPAA) is disordered. Residues 116–129 (EAPVQQAEPAAPAA) show a composition bias toward low complexity.

Belongs to the MinC family. In terms of assembly, interacts with MinD and FtsZ.

Cell division inhibitor that blocks the formation of polar Z ring septums. Rapidly oscillates between the poles of the cell to destabilize FtsZ filaments that have formed before they mature into polar Z rings. Prevents FtsZ polymerization. The protein is Probable septum site-determining protein MinC of Burkholderia pseudomallei (strain 668).